The chain runs to 114 residues: T-cell leukemia/lymphoma protein 1A (114 aa).

Belongs to the TCL1 family. As to quaternary structure, homodimer. Interacts with AKT1, AKT2 and AKT3 (via PH domain). Interacts with PNPT1; the interaction has no effect on PNPT1 exonuclease activity. Restricted in the T-cell lineage to immature thymocytes and activated peripheral lymphocytes. Preferentially expressed early in T- and B-lymphocyte differentiation.

The protein localises to the cytoplasm. The protein resides in the nucleus. Its subcellular location is the microsome. It is found in the endoplasmic reticulum. Its function is as follows. Enhances the phosphorylation and activation of AKT1, AKT2 and AKT3. Promotes nuclear translocation of AKT1. Enhances cell proliferation, stabilizes mitochondrial membrane potential and promotes cell survival. The protein is T-cell leukemia/lymphoma protein 1A (TCL1A) of Homo sapiens (Human).